The primary structure comprises 161 residues: MSLSTSLRLLRLLPAISSTATLQFALDEHLIFGTWMGSFLRPHVNITLPTWWTHGGRRWQWILIIGYPLNYLFGILNLVARYDQLQSTGSTIWYVLGLFFSVGHMLFVKMALGRIAAIEKGVPKDNVRVSMGKWLQMNWVRALITDLPAWICWIMAAVSAM.

The first 18 residues, 1–18, serve as a signal peptide directing secretion; that stretch reads MSLSTSLRLLRLLPAISS. Asparagine 45 carries N-linked (GlcNAc...) asparagine glycosylation. The next 3 helical transmembrane spans lie at 59 to 79, 92 to 112, and 139 to 159; these read WQWI…LNLV, IWYV…KMAL, and WVRA…AAVS.

Belongs to the epoxidase xenD family.

The protein resides in the membrane. The protein operates within mycotoxin biosynthesis. Functionally, epoxidase; part of the gene cluster that mediates the biosynthesis of GKK1032, fungal natural products containing a macrocyclic para-cyclophane connected to a decahydrofluorene ring system that show potent antitumor activities. Within the pathway, gkaX functions synergistically with gkaB and gkaZ to form the cyclophane. The pathway begins with the PKS-NRPS gkaA which, with the help of the trans-enoyl reductase gkaC, synthesizes the polyketide-tyrosyl acyl thioester product which can be reductively off-loaded by the terminal reductase (R) domain in gkaA. The alpha/beta hydrolase gkaG is then required to catalyze the subsequent Knoevenagel condensation that affords the 3-pyrrolin-2-one ring, whereas the three proteins gkaB, gkaX and gkaZ then function synergistically to form the cyclophane. The polypeptide is Epoxidase gkaX (Penicillium citrinum).